Reading from the N-terminus, the 394-residue chain is Elongation factor Tu (394 aa).

Positions 10-204 (KEHANIGTIG…AVDDYIPTPE (195 aa)) constitute a tr-type G domain. The segment at 19–26 (GHVDHGKT) is G1. Residue 19–26 (GHVDHGKT) participates in GTP binding. Thr26 is a binding site for Mg(2+). The G2 stretch occupies residues 60 to 64 (GITIN). The G3 stretch occupies residues 81-84 (DCPG). Residues 81–85 (DCPGH) and 136–139 (NKVD) contribute to the GTP site. A G4 region spans residues 136 to 139 (NKVD). Residues 174 to 176 (SAL) form a G5 region.

It belongs to the TRAFAC class translation factor GTPase superfamily. Classic translation factor GTPase family. EF-Tu/EF-1A subfamily. As to quaternary structure, monomer.

The protein resides in the cytoplasm. It carries out the reaction GTP + H2O = GDP + phosphate + H(+). Its function is as follows. GTP hydrolase that promotes the GTP-dependent binding of aminoacyl-tRNA to the A-site of ribosomes during protein biosynthesis. The sequence is that of Elongation factor Tu from Staphylococcus epidermidis (strain ATCC 35984 / DSM 28319 / BCRC 17069 / CCUG 31568 / BM 3577 / RP62A).